A 1481-amino-acid polypeptide reads, in one-letter code: Cystic fibrosis transmembrane conductance regulator (1481 aa).

Topologically, residues 1–77 (MQRSPLEKAS…KLINALRRCF (77 aa)) are cytoplasmic. A helical transmembrane segment spans residues 78–98 (FWRFTFYGILLYLGEVTKAVQ). An ABC transmembrane type-1 1 domain is found at 81 to 365 (FTFYGILLYL…WAVQTWYDSL (285 aa)). Topologically, residues 99 to 122 (PLLLGRIIASYDPDNKTERSIAIY) are extracellular. A helical transmembrane segment spans residues 123–146 (LGIGLCLLFIVRTLLLHPAIFGLH). At 147-195 (HIGMQMRIAMFSLIYKKTLKLSSRVLDKISIGQLVSLLSNNLNKFDEGL) the chain is on the cytoplasmic side. The helical transmembrane segment at 196 to 216 (ALAHFVWIAPLQVALLMGLIW) threads the bilayer. Residues 217-222 (ELLQAS) are Extracellular-facing. The chain crosses the membrane as a helical span at residues 223-243 (AFCGLGFLIVLALFQAGLGRM). The Cytoplasmic segment spans residues 244–298 (MMKYRDQRAGKINERLVITSEMIENIQSVKAYCWEEAMEKMIENLRQTELKLTRK). Residues 299–319 (AAYVRYFNSSAFFFSGFFVVF) traverse the membrane as a helical segment. The Extracellular portion of the chain corresponds to 320 to 339 (LSVLPYALIKGIALRKIFTT). Residues 340–358 (ISFCIVLRMAVTRQFPWAV) traverse the membrane as a helical segment. The Cytoplasmic portion of the chain corresponds to 359 to 858 (QTWYDSLGAI…YLRYITLHKS (500 aa)). ATP is bound by residues W401, S434, 458–465 (GSTGAGKT), and Q493. Residues 423-646 (NGDDNLFFSN…RPDFSSKLMG (224 aa)) form the ABC transporter 1 domain. C524 is lipidated: S-palmitoyl cysteine. Phosphoserine is present on residues S549 and S660. Residues 654 to 831 (SSERRNSILT…EEINEEDLKE (178 aa)) form a disordered R region region. S670 carries the post-translational modification Phosphoserine; by PKA. Residue S686 is modified to Phosphoserine. K688 is covalently cross-linked (Glycyl lysine isopeptide (Lys-Gly) (interchain with G-Cter in ubiquitin)). 2 positions are modified to phosphoserine: S700 and S712. At T717 the chain carries Phosphothreonine. Residues S737, S753, S768, S790, S795, and S813 each carry the phosphoserine modification. Residues 859-879 (LIFVLIWCLVIFLAEVAASLV) traverse the membrane as a helical segment. The ABC transmembrane type-1 2 domain maps to 859–1155 (LIFVLIWCLV…AVNSSIDVDS (297 aa)). Residues 880–918 (LLWLLGNTRFQDKGNSTYSRNNSYAVIITNTSSYYVFYI) lie on the Extracellular side of the membrane. 3 N-linked (GlcNAc...) asparagine glycosylation sites follow: N894, N900, and N909. The chain crosses the membrane as a discontinuously helical span at residues 919–939 (YVGVADTLLALGFFRGLPLVH). At 940-990 (TLITVSKILHHKMLHSVLQAPMSTLNTLKAGGILNRFSKDIAILDDLLPLT) the chain is on the cytoplasmic side. A helical membrane pass occupies residues 991 to 1011 (IFDFIQLLLIVIGAIAVVSVL). At 1012-1013 (QP) the chain is on the extracellular side. The helical transmembrane segment at 1014–1034 (YIFLATVPVIAAFILLRAYFL) threads the bilayer. The Cytoplasmic portion of the chain corresponds to 1035-1095 (QTSQQLKQLE…TASWFLYLST (61 aa)). A helical membrane pass occupies residues 1096–1116 (LRWFQMRIEMIFVIFFIAVTF). Residues 1117–1130 (ISILTTGEGEGTVG) lie on the Extracellular side of the membrane. A helical transmembrane segment spans residues 1131–1151 (IILTLAMNIMSTLQWAVNSSI). Residues 1152–1481 (DVDSLMRSVS…TEEEVQETRL (330 aa)) lie on the Cytoplasmic side of the membrane. One can recognise an ABC transporter 2 domain in the interval 1211–1444 (MTIKDLTAKY…KSLFRQAISH (234 aa)). ATP contacts are provided by residues Y1220 and 1245-1252 (GRTGSGKS). The interaction with GORASP2 stretch occupies residues 1387–1481 (RALKQAFADC…TEEEVQETRL (95 aa)). C1396 is lipidated: S-palmitoyl cysteine. Phosphoserine occurs at positions 1445 and 1457. The tract at residues 1453 to 1481 (HRNSSKYKSRPQIASLKEETEEEVQETRL) is disordered. Acidic residues predominate over residues 1471–1481 (ETEEEVQETRL). A PDZ-binding motif is present at residues 1479 to 1481 (TRL).

The protein belongs to the ABC transporter superfamily. ABCC family. CFTR transporter (TC 3.A.1.202) subfamily. Monomer; does not require oligomerization for channel activity. May form oligomers in the membrane. Interacts with SLC26A3, SLC26A6 and NHERF1. Interacts with SHANK2. Interacts with MYO6. Interacts (via C-terminus) with GOPC (via PDZ domain); this promotes CFTR internalization and thereby decreases channel activity. Interacts with SLC4A7 through NHERF1. Found in a complex with MYO5B and RAB11A. Interacts with ANO1. Interacts with SLC26A8. Interacts with AHCYL1; the interaction increases CFTR activity. Interacts with CSE1L. The core-glycosylated form interacts with GORASP2 (via PDZ GRASP-type 1 domain) in respone to ER stress. Interacts with MARCHF2; the interaction leads to CFTR ubiqtuitination and degradation. Interacts with ADGRG2. In terms of processing, N-glycosylated. Post-translationally, phosphorylated; cAMP treatment promotes phosphorylation and activates the channel. Dephosphorylation decreases the ATPase activity (in vitro). Phosphorylation at PKA sites activates the channel. Phosphorylation at PKC sites enhances the response to phosphorylation by PKA. Phosphorylated by AMPK; this inhibits channel activity. Ubiquitinated, leading to its degradation in the lysosome. Deubiquitination by USP10 in early endosomes enhances its endocytic recycling to the cell membrane. Ubiquitinated by RNF185 during ER stress. Ubiquitinated by MARCHF2.

The protein localises to the apical cell membrane. Its subcellular location is the early endosome membrane. It localises to the cell membrane. The protein resides in the recycling endosome membrane. It is found in the endoplasmic reticulum membrane. The protein localises to the nucleus. It catalyses the reaction ATP + H2O + closed Cl(-) channel = ADP + phosphate + open Cl(-) channel.. The enzyme catalyses chloride(in) = chloride(out). The catalysed reaction is hydrogencarbonate(in) = hydrogencarbonate(out). It carries out the reaction ATP + H2O = ADP + phosphate + H(+). Functionally, epithelial ion channel that plays an important role in the regulation of epithelial ion and water transport and fluid homeostasis. Mediates the transport of chloride ions across the cell membrane. Possesses an intrinsic ATPase activity and utilizes ATP to gate its channel; the passive flow of anions through the channel is gated by cycles of ATP binding and hydrolysis by the ATP-binding domains. The ion channel is also permeable to HCO(3)(-); selectivity depends on the extracellular chloride concentration. Exerts its function also by modulating the activity of other ion channels and transporters. Contributes to the regulation of the pH and the ion content of the epithelial fluid layer. Modulates the activity of the epithelial sodium channel (ENaC) complex, in part by regulating the cell surface expression of the ENaC complex. May regulate bicarbonate secretion and salvage in epithelial cells by regulating the transporter SLC4A7. Can inhibit the chloride channel activity of ANO1. Plays a role in the chloride and bicarbonate homeostasis during sperm epididymal maturation and capacitation. The sequence is that of Cystic fibrosis transmembrane conductance regulator from Saimiri boliviensis boliviensis (Bolivian squirrel monkey).